Reading from the N-terminus, the 392-residue chain is Formate-dependent phosphoribosylglycinamide formyltransferase (392 aa).

Residues 22 to 23 (EL) and Glu82 each bind N(1)-(5-phospho-beta-D-ribosyl)glycinamide. Residues Arg114, Lys155, 160–165 (SSGKGQ), 195–198 (EGVV), and Glu203 contribute to the ATP site. The ATP-grasp domain maps to 119-308 (RLAAEELQLP…EFALHVRAFL (190 aa)). Residues Glu267 and Glu279 each contribute to the Mg(2+) site. Residues Asp286, Lys355, and 362–363 (RR) contribute to the N(1)-(5-phospho-beta-D-ribosyl)glycinamide site.

This sequence belongs to the PurK/PurT family. Homodimer.

The enzyme catalyses N(1)-(5-phospho-beta-D-ribosyl)glycinamide + formate + ATP = N(2)-formyl-N(1)-(5-phospho-beta-D-ribosyl)glycinamide + ADP + phosphate + H(+). It functions in the pathway purine metabolism; IMP biosynthesis via de novo pathway; N(2)-formyl-N(1)-(5-phospho-D-ribosyl)glycinamide from N(1)-(5-phospho-D-ribosyl)glycinamide (formate route): step 1/1. Its function is as follows. Involved in the de novo purine biosynthesis. Catalyzes the transfer of formate to 5-phospho-ribosyl-glycinamide (GAR), producing 5-phospho-ribosyl-N-formylglycinamide (FGAR). Formate is provided by PurU via hydrolysis of 10-formyl-tetrahydrofolate. The protein is Formate-dependent phosphoribosylglycinamide formyltransferase of Shigella sonnei (strain Ss046).